Reading from the N-terminus, the 677-residue chain is Methionine--tRNA ligase (677 aa).

Positions 15 to 25 match the 'HIGH' region motif; the sequence is PYANGSIHLGH. 4 residues coordinate Zn(2+): Cys146, Cys149, Cys159, and Cys162. The 'KMSKS' region signature appears at 333–337; that stretch reads KMSKS. Lys336 contributes to the ATP binding site. The tRNA-binding domain maps to 575 to 677; sequence DFAKVDLRVA…DGAKPGQQVK (103 aa).

This sequence belongs to the class-I aminoacyl-tRNA synthetase family. MetG type 1 subfamily. In terms of assembly, homodimer. Requires Zn(2+) as cofactor.

The protein resides in the cytoplasm. It catalyses the reaction tRNA(Met) + L-methionine + ATP = L-methionyl-tRNA(Met) + AMP + diphosphate. Functionally, is required not only for elongation of protein synthesis but also for the initiation of all mRNA translation through initiator tRNA(fMet) aminoacylation. This Klebsiella pneumoniae subsp. pneumoniae (strain ATCC 700721 / MGH 78578) protein is Methionine--tRNA ligase.